The following is a 904-amino-acid chain: E3 ubiquitin-protein ligase HACE1 (904 aa).

7 ANK repeats span residues 34–63 (AVYT…DVNY), 68–97 (VKRS…NPNY), 101–130 (SGCT…DVNI), 134–163 (EGLT…NVDV), 167–196 (MGQT…DINR), 200–230 (SGAT…YLPD), and 232–261 (NGVT…RLFQ). The HECT domain maps to 569–904 (SNEKLKQGIA…HCGSYGYTMA (336 aa)). Cys-871 (glycyl thioester intermediate) is an active-site residue.

Its subcellular location is the golgi apparatus. It is found in the golgi stack membrane. The protein localises to the cytoplasm. It localises to the endoplasmic reticulum. The enzyme catalyses S-ubiquitinyl-[E2 ubiquitin-conjugating enzyme]-L-cysteine + [acceptor protein]-L-lysine = [E2 ubiquitin-conjugating enzyme]-L-cysteine + N(6)-ubiquitinyl-[acceptor protein]-L-lysine.. The protein operates within protein modification; protein ubiquitination. Its function is as follows. E3 ubiquitin-protein ligase involved in Golgi membrane fusion and regulation of small GTPases. Acts as a regulator of Golgi membrane dynamics during the cell cycle: recruited to Golgi membrane by Rab proteins and regulates postmitotic Golgi membrane fusion. Acts by mediating ubiquitination during mitotic Golgi disassembly, ubiquitination serving as a signal for Golgi reassembly later, after cell division. The chain is E3 ubiquitin-protein ligase HACE1 (hace1) from Danio rerio (Zebrafish).